Here is a 249-residue protein sequence, read N- to C-terminus: tRNA (guanine-N(1)-)-methyltransferase (249 aa).

S-adenosyl-L-methionine is bound by residues Gly-113 and 133 to 138; that span reads IGDFVV.

It belongs to the RNA methyltransferase TrmD family. In terms of assembly, homodimer.

The protein resides in the cytoplasm. It carries out the reaction guanosine(37) in tRNA + S-adenosyl-L-methionine = N(1)-methylguanosine(37) in tRNA + S-adenosyl-L-homocysteine + H(+). Specifically methylates guanosine-37 in various tRNAs. In Neisseria meningitidis serogroup C / serotype 2a (strain ATCC 700532 / DSM 15464 / FAM18), this protein is tRNA (guanine-N(1)-)-methyltransferase.